The primary structure comprises 309 residues: MEIQFLGTGAGQPAKARNVSSLVLKLLDEINEVWMFDCGEGTQRQILETTIKPRKVKKIFITHMHGDHVFGLPGFLSSRAFQANEEQTDLDIYGPVGIKSFVMTALRTSGSRLPYRIHFHEFDESSLGKIMETDKFTVYAEKLDHTIFCMGYRVVQKDLEGTLDAEALKLAGVPFGPLFGKVKNGENVTLEDGREIIAKDYISEPKKGKVITILGDTRKTDASIRLALGADVLVHESTYGKGDERIAKSHGHSTNMQAADIAKQANAKRLLLNHVSARFMGRDCWQMEEDAKTIFSNTHLVRDLEEVGI.

H63, H65, D67, H68, H145, D216, and H274 together coordinate Zn(2+). D67 (proton acceptor) is an active-site residue.

This sequence belongs to the RNase Z family. As to quaternary structure, homodimer. The cofactor is Zn(2+).

It carries out the reaction Endonucleolytic cleavage of RNA, removing extra 3' nucleotides from tRNA precursor, generating 3' termini of tRNAs. A 3'-hydroxy group is left at the tRNA terminus and a 5'-phosphoryl group is left at the trailer molecule.. Zinc phosphodiesterase, which displays some tRNA 3'-processing endonuclease activity. Probably involved in tRNA maturation, by removing a 3'-trailer from precursor tRNA. This chain is Ribonuclease Z, found in Streptococcus agalactiae serotype V (strain ATCC BAA-611 / 2603 V/R).